We begin with the raw amino-acid sequence, 1164 residues long: FH1/FH2 domain-containing protein 1 (1164 aa).

Residues 53–458 form the GBD/FH3 domain; that stretch reads AQIPAVHRLL…AAETEKQVAL (406 aa). Disordered regions lie at residues 340-411 and 470-500; these read DIEE…VGPP and MPNE…QSPA. The segment covering 355–368 has biased composition (basic and acidic residues); that stretch reads KPSSEEGKRSRRSL. At serine 367 the chain carries Phosphoserine. A compositionally biased stretch (low complexity) spans 402-411; the sequence is GPASSPVGPP. Serine 486 carries the phosphoserine modification. The region spanning 487-615 is the FH1 domain; sequence PETAPAARTP…LAAPLPHSVP (129 aa). Threonine 495 carries the post-translational modification Phosphothreonine. Phosphoserine is present on residues serine 498, serine 523, and serine 573. A disordered region spans residues 566-619; it reads GKDIPAPSPPLPLLSGVPPPPPLPPPPPIKGPFPPPPPLPLAAPLPHSVPDSSA. A compositionally biased stretch (pro residues) spans 571–608; the sequence is APSPPLPLLSGVPPPPPLPPPPPIKGPFPPPPPLPLAA. The segment at 612 to 807 is interaction with ROCK1; that stretch reads HSVPDSSALP…AEPLFDLKVG (196 aa). Residues 616-1013 form the FH2 domain; sequence DSSALPTKRK…YRERNKTRGR (398 aa). Residue threonine 690 is modified to Phosphothreonine. The stretch at 884–921 forms a coiled coil; sequence LTRCAKVDFEQLTENLGQLERRSRAAEESLRSLAKHEL. Residues 1020–1143 are disordered; that stretch reads KFSGVAGEAP…NRKSLRRTLK (124 aa). Low complexity predominate over residues 1028-1041; it reads APSNPSVPVAVSSG. Positions 1053 to 1133 constitute a DAD domain; sequence MKSLLTSRPE…AARERKRSRG (81 aa). Residues 1073–1089 are compositionally biased toward polar residues; that stretch reads MVQSSSPIMPTVGPSTA. Positions 1127–1142 are enriched in basic residues; it reads ERKRSRGNRKSLRRTL.

This sequence belongs to the formin homology family. Self-associates via the FH2 domain. Binds to F-actin via its N-terminus. Binds to the cytoplasmic domain of CD21 via its C-terminus. Interacts with ROCK1 in a Src-dependent manner. Phosphorylated by ROCK1. In terms of tissue distribution, ubiquitous. Highly expressed in spleen.

It localises to the cytoplasm. The protein localises to the cytoskeleton. The protein resides in the cell projection. It is found in the bleb. In terms of biological role, required for the assembly of F-actin structures, such as stress fibers. Depends on the Rho-ROCK cascade for its activity. Contributes to the coordination of microtubules with actin fibers and plays a role in cell elongation. Acts synergistically with ROCK1 to promote SRC-dependent non-apoptotic plasma membrane blebbing. The polypeptide is FH1/FH2 domain-containing protein 1 (FHOD1) (Homo sapiens (Human)).